The following is a 196-amino-acid chain: Holliday junction branch migration complex subunit RuvA (196 aa).

The interval 1-63 (MIASVRGEVL…EDSMTLYGFP (63 aa)) is domain I. Positions 64–138 (DGETRDLFLT…DKVGVAATGG (75 aa)) are domain II. The flexible linker stretch occupies residues 138 to 142 (GALST). The segment at 143–196 (NGHAVRSPVVEALVGLGFAAKQAEEATDTVLAANHDATTSSALRSALSLLGKAR) is domain III.

Belongs to the RuvA family. Homotetramer. Forms an RuvA(8)-RuvB(12)-Holliday junction (HJ) complex. HJ DNA is sandwiched between 2 RuvA tetramers; dsDNA enters through RuvA and exits via RuvB. An RuvB hexamer assembles on each DNA strand where it exits the tetramer. Each RuvB hexamer is contacted by two RuvA subunits (via domain III) on 2 adjacent RuvB subunits; this complex drives branch migration. In the full resolvosome a probable DNA-RuvA(4)-RuvB(12)-RuvC(2) complex forms which resolves the HJ.

The protein resides in the cytoplasm. The RuvA-RuvB-RuvC complex processes Holliday junction (HJ) DNA during genetic recombination and DNA repair, while the RuvA-RuvB complex plays an important role in the rescue of blocked DNA replication forks via replication fork reversal (RFR). RuvA specifically binds to HJ cruciform DNA, conferring on it an open structure. The RuvB hexamer acts as an ATP-dependent pump, pulling dsDNA into and through the RuvAB complex. HJ branch migration allows RuvC to scan DNA until it finds its consensus sequence, where it cleaves and resolves the cruciform DNA. The polypeptide is Holliday junction branch migration complex subunit RuvA (Mycobacterium bovis (strain ATCC BAA-935 / AF2122/97)).